Consider the following 461-residue polypeptide: Cysteine--tRNA ligase (461 aa).

Cysteine 28 is a binding site for Zn(2+). The 'HIGH' region motif lies at 30–40 (ITVYDLCHIGH). Zn(2+) contacts are provided by cysteine 209, histidine 234, and glutamate 238. The short motif at 266-270 (KMSKS) is the 'KMSKS' region element. ATP is bound at residue lysine 269.

Belongs to the class-I aminoacyl-tRNA synthetase family. As to quaternary structure, monomer. The cofactor is Zn(2+).

The protein resides in the cytoplasm. It catalyses the reaction tRNA(Cys) + L-cysteine + ATP = L-cysteinyl-tRNA(Cys) + AMP + diphosphate. This chain is Cysteine--tRNA ligase, found in Escherichia coli O127:H6 (strain E2348/69 / EPEC).